The primary structure comprises 875 residues: MSKSTAEIRQAFLDFFHSKGHQVVASSSLVPDNDPTLLFTNAGMNQFKDVFLGLDNRFYRRATTSQRCVRAGGKHNDLENVGYTARHHTFFEMLGNFSFGDYFKHDAIRFAWELLTGEHWFNLPKEKLWVTVYATDDEAYNIWASEVGIPAERIIRIGDNKGSAYASDNFWQMGDTGPCGPCSEIFYDHGEHIWGGPPGSPEEDGDRYIEIWNLVFMQFNRQADGTLLPLPKPSVDTGMGLERIAAVLQHVNSNYDIDLFKTLIAAAAEATGASDPDSKSLRVIADHIRSCVFLVSDGVVPSNEGRGYVLRRIIRRAIRHGNMLGASDTFFYKLVAPLIDVMGSAASQLQPQQAMVEQVLRAEEEQFARTLERGLTLLDDELAKLTGDTLDGETAFRLYDTYGFSLDLTADVCRERNLRVDEAGFERAMEAQRKRARESSGFGADYNSLLRVDETTRFFGYEHLEHQGRVTALFRDGQLVGVIRQGEEAVVVLDETPFYGESGGQVGDRGVLKAASGVFEVADTQKYGKAFGHQGKLSYGELKLGAQVTAQVDSARRERIRLNHSATHLLHAALRQVLGDHVGQKGSLVNDHYLRFDFSHNEAMKPEQIRRVEEIVNEQIRCNLPIQTDIMALEDARNKGAMALFGEKYEAQVRVLSMGDFSTELCGGTHASRTGDIGLFRIIAESGTAAGIRRIEAVTGEEALASLHQQSDLVQHIAQLVKGDSQTLVDKVRALQERSRQLEKDLQQLKNQQAAQESASLGRNVRDINGVKVLVRQLDSAEPKMLRTMVDDLKNQLGSAVIILATVAEGKVSLIAGVTKDLTDRVKAGDIVGHLAQQVGGKGGGRPDLAQAGGSDIAALPAALASVDAMLAAKL.

Zn(2+)-binding residues include His-564, His-568, Cys-666, and His-670.

This sequence belongs to the class-II aminoacyl-tRNA synthetase family. As to quaternary structure, homotetramer. Zn(2+) is required as a cofactor.

The protein resides in the cytoplasm. The catalysed reaction is tRNA(Ala) + L-alanine + ATP = L-alanyl-tRNA(Ala) + AMP + diphosphate. Its function is as follows. Catalyzes the attachment of alanine to tRNA(Ala) in a two-step reaction: alanine is first activated by ATP to form Ala-AMP and then transferred to the acceptor end of tRNA(Ala). Also edits incorrectly charged Ser-tRNA(Ala) and Gly-tRNA(Ala) via its editing domain. In Sodalis glossinidius (strain morsitans), this protein is Alanine--tRNA ligase.